Reading from the N-terminus, the 371-residue chain is Queuine tRNA-ribosyltransferase (371 aa).

The Proton acceptor role is filled by aspartate 90. Residues 90 to 94, aspartate 144, glutamine 189, and glycine 215 contribute to the substrate site; that span reads DSGGF. An RNA binding region spans residues 246-252; the sequence is GVGTPEN. The active-site Nucleophile is aspartate 265. Positions 270–274 are RNA binding; important for wobble base 34 recognition; sequence TRNAR. Positions 303, 305, 308, and 334 each coordinate Zn(2+).

This sequence belongs to the queuine tRNA-ribosyltransferase family. Homodimer. Within each dimer, one monomer is responsible for RNA recognition and catalysis, while the other monomer binds to the replacement base PreQ1. Requires Zn(2+) as cofactor.

It catalyses the reaction 7-aminomethyl-7-carbaguanine + guanosine(34) in tRNA = 7-aminomethyl-7-carbaguanosine(34) in tRNA + guanine. It participates in tRNA modification; tRNA-queuosine biosynthesis. Catalyzes the base-exchange of a guanine (G) residue with the queuine precursor 7-aminomethyl-7-deazaguanine (PreQ1) at position 34 (anticodon wobble position) in tRNAs with GU(N) anticodons (tRNA-Asp, -Asn, -His and -Tyr). Catalysis occurs through a double-displacement mechanism. The nucleophile active site attacks the C1' of nucleotide 34 to detach the guanine base from the RNA, forming a covalent enzyme-RNA intermediate. The proton acceptor active site deprotonates the incoming PreQ1, allowing a nucleophilic attack on the C1' of the ribose to form the product. After dissociation, two additional enzymatic reactions on the tRNA convert PreQ1 to queuine (Q), resulting in the hypermodified nucleoside queuosine (7-(((4,5-cis-dihydroxy-2-cyclopenten-1-yl)amino)methyl)-7-deazaguanosine). In Helicobacter pylori (strain J99 / ATCC 700824) (Campylobacter pylori J99), this protein is Queuine tRNA-ribosyltransferase.